The chain runs to 178 residues: Interleukin-10 (178 aa).

A signal peptide spans 1–18; the sequence is MPRSALLCCLILLAGVAA. 2 disulfides stabilise this stretch: Cys-30/Cys-126 and Cys-80/Cys-132. Asn-134 carries N-linked (GlcNAc...) asparagine glycosylation.

The protein belongs to the IL-10 family. Homodimer. Interacts with IL10RA and IL10RB.

It localises to the secreted. Its function is as follows. Major immune regulatory cytokine that acts on many cells of the immune system where it has profound anti-inflammatory functions, limiting excessive tissue disruption caused by inflammation. Mechanistically, IL10 binds to its heterotetrameric receptor comprising IL10RA and IL10RB leading to JAK1 and STAT2-mediated phosphorylation of STAT3. In turn, STAT3 translocates to the nucleus where it drives expression of anti-inflammatory mediators. Targets antigen-presenting cells (APCs) such as macrophages and monocytes and inhibits their release of pro-inflammatory cytokines including granulocyte-macrophage colony-stimulating factor /GM-CSF, granulocyte colony-stimulating factor/G-CSF, IL-1 alpha, IL-1 beta, IL-6, IL-8 and TNF-alpha. Also interferes with antigen presentation by reducing the expression of MHC-class II and co-stimulatory molecules, thereby inhibiting their ability to induce T cell activation. In addition, controls the inflammatory response of macrophages by reprogramming essential metabolic pathways including mTOR signaling. This Lama glama (Llama) protein is Interleukin-10 (IL10).